The following is a 355-amino-acid chain: Protein pelota homolog (355 aa).

It belongs to the eukaryotic release factor 1 family. Pelota subfamily. As to quaternary structure, monomer. It depends on a divalent metal cation as a cofactor.

It localises to the cytoplasm. Functionally, may function in recognizing stalled ribosomes, interact with stem-loop structures in stalled mRNA molecules, and effect endonucleolytic cleavage of the mRNA. May play a role in the release non-functional ribosomes and degradation of damaged mRNAs. Has endoribonuclease activity. This chain is Protein pelota homolog, found in Natronomonas pharaonis (strain ATCC 35678 / DSM 2160 / CIP 103997 / JCM 8858 / NBRC 14720 / NCIMB 2260 / Gabara) (Halobacterium pharaonis).